The primary structure comprises 434 residues: Alpha-enolase (434 aa).

Ser-40 contacts Mg(2+). 2 residues coordinate substrate: His-158 and Glu-167. The active-site Proton donor is the Glu-210. Mg(2+)-binding residues include Asp-245, Glu-293, and Asp-318. Substrate is bound by residues Glu-293, Asp-318, 370–373 (SHRS), and Lys-394.

This sequence belongs to the enolase family. Homodimer. Mg(2+) serves as cofactor.

The protein localises to the cytoplasm. It carries out the reaction (2R)-2-phosphoglycerate = phosphoenolpyruvate + H2O. It participates in carbohydrate degradation; glycolysis; pyruvate from D-glyceraldehyde 3-phosphate: step 4/5. This is Alpha-enolase from Trachemys scripta elegans (Red-eared slider turtle).